A 222-amino-acid chain; its full sequence is Adenylate kinase (222 aa).

Position 2 (S2) is a propeptide, removed in mature form. 2 positions are modified to N-acetylserine: S2 and S3. Residue 16 to 21 (GAGKGT) coordinates ATP. The segment at 36 to 65 (ATGDMLRSQIAKGTQLGLEAKKIMDQGGLV) is NMP. AMP-binding positions include T37, R42, 63 to 65 (GLV), 92 to 95 (GFPR), and Q99. The LID stretch occupies residues 133–170 (GRLIHPASGRSYHKIFNPPKEDMKDDVTGEALVQRSDD). ATP-binding positions include R134 and 143 to 144 (SY). Positions 167 and 178 each coordinate AMP. Residue Q206 coordinates ATP.

Belongs to the adenylate kinase family. AK2 subfamily. Monomer.

The protein resides in the cytoplasm. It localises to the cytosol. The protein localises to the mitochondrion intermembrane space. The catalysed reaction is AMP + ATP = 2 ADP. Functionally, catalyzes the reversible transfer of the terminal phosphate group between ATP and AMP. Plays an important role in cellular energy homeostasis and in adenine nucleotide metabolism. Adenylate kinase activity is critical for regulation of the phosphate utilization and the AMP de novo biosynthesis pathways. This Saccharomyces cerevisiae (strain RM11-1a) (Baker's yeast) protein is Adenylate kinase.